The chain runs to 423 residues: Serine--tRNA ligase (423 aa).

Thr230–Glu232 serves as a coordination point for L-serine. An ATP-binding site is contributed by Arg261–Glu263. Glu284 contacts L-serine. Position 348–351 (Glu348–Ser351) interacts with ATP. An L-serine-binding site is contributed by Ser384.

This sequence belongs to the class-II aminoacyl-tRNA synthetase family. Type-1 seryl-tRNA synthetase subfamily. In terms of assembly, homodimer. The tRNA molecule binds across the dimer.

The protein resides in the cytoplasm. The enzyme catalyses tRNA(Ser) + L-serine + ATP = L-seryl-tRNA(Ser) + AMP + diphosphate + H(+). It carries out the reaction tRNA(Sec) + L-serine + ATP = L-seryl-tRNA(Sec) + AMP + diphosphate + H(+). The protein operates within aminoacyl-tRNA biosynthesis; selenocysteinyl-tRNA(Sec) biosynthesis; L-seryl-tRNA(Sec) from L-serine and tRNA(Sec): step 1/1. Functionally, catalyzes the attachment of serine to tRNA(Ser). Is also able to aminoacylate tRNA(Sec) with serine, to form the misacylated tRNA L-seryl-tRNA(Sec), which will be further converted into selenocysteinyl-tRNA(Sec). The sequence is that of Serine--tRNA ligase from Macrococcus caseolyticus (strain JCSC5402) (Macrococcoides caseolyticum).